The chain runs to 391 residues: tRNA(Met) cytidine acetate ligase (391 aa).

Residues 7 to 20, Gly101, Asn153, and Arg178 contribute to the ATP site; that span reads IAEYNPLHNGHIYQ.

This sequence belongs to the TmcAL family.

The protein localises to the cytoplasm. It catalyses the reaction cytidine(34) in elongator tRNA(Met) + acetate + ATP = N(4)-acetylcytidine(34) in elongator tRNA(Met) + AMP + diphosphate. In terms of biological role, catalyzes the formation of N(4)-acetylcytidine (ac(4)C) at the wobble position of elongator tRNA(Met), using acetate and ATP as substrates. First activates an acetate ion to form acetyladenylate (Ac-AMP) and then transfers the acetyl group to tRNA to form ac(4)C34. The sequence is that of tRNA(Met) cytidine acetate ligase from Latilactobacillus sakei subsp. sakei (strain 23K) (Lactobacillus sakei subsp. sakei).